Reading from the N-terminus, the 83-residue chain is Mu-theraphotoxin-Hhn2j 1 (83 aa).

The first 21 residues, 1 to 21 (MKASMFLALAGLVLLFVVGYA), serve as a signal peptide directing secretion. A propeptide spanning residues 22 to 48 (SESEEKEFPIELLSKIFAVDVFKGEER) is cleaved from the precursor. Intrachain disulfides connect Cys50–Cys65, Cys57–Cys70, and Cys64–Cys77. At Leu81 the chain carries Leucine amide.

The protein belongs to the neurotoxin 10 (Hwtx-1) family. 15 (Hntx-3) subfamily. Monomer. As to expression, expressed by the venom gland.

The protein resides in the secreted. Lethal neurotoxin. Selectively blocks tetrodotoxin-sensitive voltage-gated sodium channels (Nav). Does not affect tetrodotoxin-resistant voltage-gated sodium channels or calcium channels. The protein is Mu-theraphotoxin-Hhn2j 1 of Cyriopagopus hainanus (Chinese bird spider).